The primary structure comprises 63 residues: U7-theraphotoxin-Cg1a (63 aa).

The N-terminal stretch at 1 to 21 (MKTSILFVIFGLALLFALSVA) is a signal peptide. A propeptide spanning residues 22–31 (IEMEEEETDR) is cleaved from the precursor. 3 disulfide bridges follow: Cys33–Cys47, Cys40–Cys52, and Cys46–Cys59.

Expressed by the venom gland.

It is found in the secreted. Inhibits preferentially tetrodotoxin-insensitive sodium currents (Nav) on rat cardiac myocytes (IC(50) is 0.26 uM) and has weaker inhibition activity toward tetrodotoxin-sensitive sodium currents on rat dorsal root ganglion (DRG) sensory neurons (IC(50) is 0.83 uM) and on cockroach dorsal unpaired median (DUM) neurons (IC(50) is 1.19 uM). Has no significant effect on potassium currents on DRG neurons. The protein is U7-theraphotoxin-Cg1a of Chilobrachys guangxiensis (Chinese earth tiger tarantula).